Reading from the N-terminus, the 194-residue chain is UPF0215 protein Mbar_A0619 (194 aa).

The protein belongs to the UPF0215 family.

The chain is UPF0215 protein Mbar_A0619 from Methanosarcina barkeri (strain Fusaro / DSM 804).